The chain runs to 335 residues: Anthranilate phosphoribosyltransferase 2 (335 aa).

Residues glycine 70, 73–74 (GD), threonine 78, 80–83 (NIST), 98–106 (KHGNRSASS), and serine 110 each bind 5-phospho-alpha-D-ribose 1-diphosphate. Glycine 70 is an anthranilate binding site. Serine 82 contacts Mg(2+). Anthranilate is bound at residue asparagine 101. Arginine 156 is a binding site for anthranilate. The Mg(2+) site is built by aspartate 215 and glutamate 216.

It belongs to the anthranilate phosphoribosyltransferase family. Homodimer. Mg(2+) is required as a cofactor.

The catalysed reaction is N-(5-phospho-beta-D-ribosyl)anthranilate + diphosphate = 5-phospho-alpha-D-ribose 1-diphosphate + anthranilate. It participates in amino-acid biosynthesis; L-tryptophan biosynthesis; L-tryptophan from chorismate: step 2/5. Functionally, catalyzes the transfer of the phosphoribosyl group of 5-phosphorylribose-1-pyrophosphate (PRPP) to anthranilate to yield N-(5'-phosphoribosyl)-anthranilate (PRA). In Streptomyces coelicolor (strain ATCC BAA-471 / A3(2) / M145), this protein is Anthranilate phosphoribosyltransferase 2.